A 288-amino-acid chain; its full sequence is Diaminopimelate epimerase (288 aa).

Substrate-binding residues include N14 and N67. Residue C76 is the Proton donor of the active site. Substrate is bound by residues 77 to 78, N166, N199, and 217 to 218; these read GN and ER. Residue C226 is the Proton acceptor of the active site. 227–228 lines the substrate pocket; sequence GT.

The protein belongs to the diaminopimelate epimerase family. Homodimer.

It localises to the cytoplasm. It carries out the reaction (2S,6S)-2,6-diaminopimelate = meso-2,6-diaminopimelate. Its pathway is amino-acid biosynthesis; L-lysine biosynthesis via DAP pathway; DL-2,6-diaminopimelate from LL-2,6-diaminopimelate: step 1/1. Functionally, catalyzes the stereoinversion of LL-2,6-diaminopimelate (L,L-DAP) to meso-diaminopimelate (meso-DAP), a precursor of L-lysine and an essential component of the bacterial peptidoglycan. The protein is Diaminopimelate epimerase of Bacillus cereus (strain ATCC 14579 / DSM 31 / CCUG 7414 / JCM 2152 / NBRC 15305 / NCIMB 9373 / NCTC 2599 / NRRL B-3711).